The chain runs to 1071 residues: MLRDGNEGMFTIPGFSQIQFEGFFRFIDQGLTEELHKFPKIEDTDQEIEFQLFVDTYRLVEPLIKERDAVYESLTYSSELYVPAGLIWKTGRDMQEQTIFIGNIPLMNSLGTSIVNGIYRIVINQILQSPGIYYRSELDHNGISVYTGSIISDWGGRSELEIDRKARIWARVSRKQKISILVPSSAMGSNLREILDNVCYPEIFLSFPNEKEKKKIGSRENAILEFYQQFACVGGDPVFSESLCKELQKKFFQQRCELGRIGRRNMNWRLNLDIPQNNLFLLPRDVLAAADHLIGMKFGMGTLDDMNHLKNKRIRSVADLLQDQFGLALVRLENVVRGTICGAIRHKLIPTPHNLVTSTPLTTTYESFFGLHPLSQVLDRTNPLTQIVHGRKSSYLGPGGLTGRTASFRIRDIHPSHYGRICPIDTSEGINVGLIGSLAIHARIGYLGSIESPFYEISQRSKEVQTVYLSPNRDEYYMVAAGNSLALNQGIQEEQVVPARYRQEFLTIAWEQIHLRSIFPFQYFSIGASLIPFIEHNDANRALMSSNMQRQAVPLSRSEKCIVGTGLERQAALDSGVSAIAEQDGKIIYTDTDKIVLSGNGDTAISIPLVIYQRSNKNTCMHQKPQVPRGKCLKKGQILADGAATVGGELALGKNVLVSYMPWEGYNFEDAVLISERLVYGDIYTSFHIRKYEIQTHVTSQGPERITNEIPHLEAHLLRNLDINGIVMLGSWIETGDILVGKLTPQTAKESSYAPEDRLLRAILGIQVSTAKETCLKLPIGGRGRVIDVRWIQKGGGSSYNPEMIRVYISQKREIKVGDKVAGRHGNKGIISKILPRQDMPYLQDGTPVDMVFNPLGVPSRMNVGQIFECSLGLAGDLLDRHYRIAPFDERYEQEASRKLVFPELYEASKQTANPWVFEPEYPGKSRIFDGRTGDPFEQPVIIGKSYILKLIHQVDDKIHGRSSGHYALVTQQPLRGRAKQGGQRVGEMEVWALEGFGVAHISQEMLTYKSDHIRARQEVLGTTIIGGTIPNPEDAPESFRLLVRELRSLALELNHFLVSEKNFQIHRKEA.

It belongs to the RNA polymerase beta chain family. In terms of assembly, in plastids the minimal PEP RNA polymerase catalytic core is composed of four subunits: alpha, beta, beta', and beta''. When a (nuclear-encoded) sigma factor is associated with the core the holoenzyme is formed, which can initiate transcription.

The protein localises to the plastid. It localises to the chloroplast. It carries out the reaction RNA(n) + a ribonucleoside 5'-triphosphate = RNA(n+1) + diphosphate. DNA-dependent RNA polymerase catalyzes the transcription of DNA into RNA using the four ribonucleoside triphosphates as substrates. The sequence is that of DNA-directed RNA polymerase subunit beta from Drimys granadensis.